The chain runs to 476 residues: MGKTLYQNKTLYQKLYDAHIVYEAPNETPLLYIDRHLVHEVTSPQAFDGLRAMGRPVRQPGKTFATMDHNVSTQTKDINASGEMARIQMQELIKNCAEFGVSLYDLNHPFQGIVHVIGPEQGMTLPGMTIVCGDSHTATHGAFGSLAFGIGTSEVEHVLATQTLKQGRAKTMKIEVNGEVGPGITAKDIVLAIIGKTGSAGGTGHVVEFCGSAIEALSMEGRMTLCNMAIEMGAKAGLVAPDDTTFNYLKGRQFAPTGEQWEQGVAYWRTLKSDADAKFDTVVTLDAADIAPQVTWGTNPGQVIAVNQIIPAPESFSDPVERASAEKALAYMDLRPGIKLTEVAIDKVFIGSCTNSRIEDLRAAAAVAQGRKVASGVQAIVVPGSGPVKAQAEAEGLDKIFIEAGFEWRLPGCSMCLAMNNDRLEPGERCASTSNRNFEGRQGRGGRTHLVSPAMAAAAAVSGHFADVRDLSAATH.

3 residues coordinate [4Fe-4S] cluster: C353, C413, and C416.

Belongs to the aconitase/IPM isomerase family. LeuC type 1 subfamily. As to quaternary structure, heterodimer of LeuC and LeuD. It depends on [4Fe-4S] cluster as a cofactor.

It carries out the reaction (2R,3S)-3-isopropylmalate = (2S)-2-isopropylmalate. It functions in the pathway amino-acid biosynthesis; L-leucine biosynthesis; L-leucine from 3-methyl-2-oxobutanoate: step 2/4. Catalyzes the isomerization between 2-isopropylmalate and 3-isopropylmalate, via the formation of 2-isopropylmaleate. In Yersinia enterocolitica serotype O:8 / biotype 1B (strain NCTC 13174 / 8081), this protein is 3-isopropylmalate dehydratase large subunit.